The following is a 298-amino-acid chain: MNNLQTKFPHIAIKLNEPLSKYTYTKTGGAADVFVMPKTIEEAQEVVAYCHQNKIPLTILGNGSNLIIKDGGIRGVILHLDLLQTIERNNTQIVAMSGAKLIDTAKFALNESLSGLEFACGIPGSIGGALHMNAGAYGGEISDVLEAATVLTQTGELKKLKRSELKAAYRFSTIAEKNYIVLDATFSLALEEKNLIQAKMDELTAAREAKQPLEYPSCGSVFKRPPGHFAGKLIQDSGLQGHIIGGAQVSLKHAGFIVNIGGATATDYMNLIAYVQQTVREKFDVELETEVKIIGEDK.

In terms of domain architecture, FAD-binding PCMH-type spans 26–191 (KTGGAADVFV…LDATFSLALE (166 aa)). The active site involves arginine 170. Serine 220 serves as the catalytic Proton donor. Glutamate 290 is a catalytic residue.

It belongs to the MurB family. The cofactor is FAD.

The protein resides in the cytoplasm. It carries out the reaction UDP-N-acetyl-alpha-D-muramate + NADP(+) = UDP-N-acetyl-3-O-(1-carboxyvinyl)-alpha-D-glucosamine + NADPH + H(+). It functions in the pathway cell wall biogenesis; peptidoglycan biosynthesis. Its function is as follows. Cell wall formation. This chain is UDP-N-acetylenolpyruvoylglucosamine reductase, found in Listeria monocytogenes serovar 1/2a (strain ATCC BAA-679 / EGD-e).